The sequence spans 238 residues: Mannose-binding protein A (238 aa).

Residues 1 to 17 (MLLLPLLVLLCVVSVSS) form the signal peptide. The segment covering 38–49 (DGRDGPKGEKGE) has biased composition (basic and acidic residues). The interval 38–87 (DGRDGPKGEKGEPGQGLRGLQGPPGKLGPPGSVGAPGSQGPKGQKGDRGD) is disordered. The Collagen-like domain occupies 39-88 (GRDGPKGEKGEPGQGLRGLQGPPGKLGPPGSVGAPGSQGPKGQKGDRGDS). P43 carries the post-translational modification 4-hydroxyproline. A 5-hydroxylysine mark is found at K44 and K47. O-linked (Gal...) hydroxylysine glycans are attached at residues K44 and K47. P50, P61, P67, P73, and P78 each carry 4-hydroxyproline. 2 positions are modified to 5-hydroxylysine: K79 and K82. Residues K79 and K82 are each glycosylated (O-linked (Gal...) hydroxylysine). A C-type lectin domain is found at 143–238 (ALCSELRGTV…SHTAVCEFPA (96 aa)). 2 disulfide bridges follow: C145–C234 and C212–C226. Residues D178, E182, E202, N204, D205, E210, D211, N222, and D223 each coordinate Ca(2+). The interval 202–210 (EPNDHGSGE) is calcium-dependent carbohydrate binding.

In terms of assembly, homotrimer. Forms higher oligomeric complexes formed by the association of two, three or more homotrimers. Oligomerization occurs in the endoplasmic reticulum. Interacts with MASP1 and MASP2. Hydroxylated on lysine and proline residues within the collagen-like domain. In terms of processing, O-glycosylated. O-linked glycans on hydroxylysine residues consist of Glc-Gal disaccharides bound to the oxygen atom of post-translationally added hydroxyl groups. As to expression, detected in blood serum (at protein level).

Its subcellular location is the secreted. Functionally, calcium-dependent lectin. Plays a role in the innate immune response by binding mannose, fucose and N-acetylglucosamine moieties on different microorganisms and mediating activation of the lectin complement pathway. Binds to late apoptotic cells, as well as to apoptotic blebs and to necrotic cells, but not to early apoptotic cells, facilitating their uptake by macrophages. The sequence is that of Mannose-binding protein A (Mbl1) from Rattus norvegicus (Rat).